Reading from the N-terminus, the 109-residue chain is ATP-dependent Clp protease adapter protein ClpS (109 aa).

The protein belongs to the ClpS family. As to quaternary structure, binds to the N-terminal domain of the chaperone ClpA.

Involved in the modulation of the specificity of the ClpAP-mediated ATP-dependent protein degradation. The chain is ATP-dependent Clp protease adapter protein ClpS from Lawsonia intracellularis (strain PHE/MN1-00).